The sequence spans 416 residues: Multifunctional CCA protein (416 aa).

ATP-binding residues include glycine 8 and arginine 11. Positions 8 and 11 each coordinate CTP. 2 residues coordinate Mg(2+): aspartate 21 and aspartate 23. 3 residues coordinate ATP: arginine 91, arginine 137, and arginine 140. Residues arginine 91, arginine 137, and arginine 140 each coordinate CTP. In terms of domain architecture, HD spans threonine 228–tryptophan 329.

The protein belongs to the tRNA nucleotidyltransferase/poly(A) polymerase family. Bacterial CCA-adding enzyme type 1 subfamily. As to quaternary structure, monomer. Can also form homodimers and oligomers. The cofactor is Mg(2+). Ni(2+) is required as a cofactor.

It carries out the reaction a tRNA precursor + 2 CTP + ATP = a tRNA with a 3' CCA end + 3 diphosphate. The catalysed reaction is a tRNA with a 3' CCA end + 2 CTP + ATP = a tRNA with a 3' CCACCA end + 3 diphosphate. Functionally, catalyzes the addition and repair of the essential 3'-terminal CCA sequence in tRNAs without using a nucleic acid template. Adds these three nucleotides in the order of C, C, and A to the tRNA nucleotide-73, using CTP and ATP as substrates and producing inorganic pyrophosphate. tRNA 3'-terminal CCA addition is required both for tRNA processing and repair. Also involved in tRNA surveillance by mediating tandem CCA addition to generate a CCACCA at the 3' terminus of unstable tRNAs. While stable tRNAs receive only 3'-terminal CCA, unstable tRNAs are marked with CCACCA and rapidly degraded. This is Multifunctional CCA protein from Shewanella baltica (strain OS195).